The sequence spans 474 residues: GTPase Der (474 aa).

EngA-type G domains lie at 2 to 166 and 212 to 385; these read LRIA…NVPE and LKIA…ETVS. GTP contacts are provided by residues 8 to 15, 55 to 59, 118 to 121, 218 to 225, 265 to 269, and 330 to 333; these read GRPNVGKS, DTGGV, NKAD, DTAGL, and NKWD. Residues 386–470 form the KH-like domain; that stretch reads SKVPTPVVNK…PFDLEFKEKT (85 aa).

It belongs to the TRAFAC class TrmE-Era-EngA-EngB-Septin-like GTPase superfamily. EngA (Der) GTPase family. Associates with the 50S ribosomal subunit.

Functionally, GTPase that plays an essential role in the late steps of ribosome biogenesis. This chain is GTPase Der, found in Chlamydia caviae (strain ATCC VR-813 / DSM 19441 / 03DC25 / GPIC) (Chlamydophila caviae).